Here is a 146-residue protein sequence, read N- to C-terminus: Hemoglobin subunit beta (146 aa).

At V1 the chain carries N-acetylvaline. One can recognise a Globin domain in the interval 2 to 146 (HLTAEEKSLV…VANALAHKYH (145 aa)). S44 carries the phosphoserine modification. K59 carries the post-translational modification N6-acetyllysine. H63 contacts heme b. Position 82 is an N6-acetyllysine (K82). Heme b is bound at residue H92. C93 carries the S-nitrosocysteine modification. K144 bears the N6-acetyllysine mark.

It belongs to the globin family. Heterotetramer of two alpha chains and two beta chains. Red blood cells.

Involved in oxygen transport from the lung to the various peripheral tissues. The chain is Hemoglobin subunit beta (HBB) from Canis latrans (Coyote).